A 486-amino-acid polypeptide reads, in one-letter code: E3 ubiquitin-protein ligase RNF8 (486 aa).

Residues Val-38–Leu-92 enclose the FHA domain. Residues Gln-68–Gly-72 form a required for interaction with PIWIL1 region. Phosphoserine is present on Ser-157. Over residues Ser-180 to Glu-201 the composition is skewed to polar residues. The tract at residues Ser-180 to Leu-207 is disordered. The segment at Cys-404–Arg-442 adopts an RING-type zinc-finger fold.

This sequence belongs to the RNF8 family. Homodimer. Forms a E2-E3 ubiquitin ligase complex composed of the RNF8 homodimer and a E2 heterodimer of UBE2N and UBE2V2. Interacts with class III E2s, including UBE2E1, UBE2E2, and UBE2E3 and with UBE2N. Interacts with RXRA. Interacts (via FHA domain) with phosphorylated HERC2 (via C-terminus). Interacts with PIWIL1; leading to sequester RNF8 in the cytoplasm. Interacts with WRAP53/TCAB1. Autoubiquitinated through 'Lys-48' and 'Lys-63' of ubiquitin. 'Lys-63' polyubiquitination is mediated by UBE2N. 'Lys-29'-type polyubiquitination is also observed, but it doesn't require its own functional RING-type zinc finger.

The protein localises to the nucleus. It localises to the cytoplasm. It is found in the midbody. The protein resides in the chromosome. Its subcellular location is the telomere. The catalysed reaction is S-ubiquitinyl-[E2 ubiquitin-conjugating enzyme]-L-cysteine + [acceptor protein]-L-lysine = [E2 ubiquitin-conjugating enzyme]-L-cysteine + N(6)-ubiquitinyl-[acceptor protein]-L-lysine.. Its pathway is protein modification; protein ubiquitination. E3 ubiquitin-protein ligase that plays a key role in DNA damage signaling via 2 distinct roles: by mediating the 'Lys-63'-linked ubiquitination of histones H2A and H2AX and promoting the recruitment of DNA repair proteins at double-strand breaks (DSBs) sites, and by catalyzing 'Lys-48'-linked ubiquitination to remove target proteins from DNA damage sites. Following DNA DSBs, it is recruited to the sites of damage by ATM-phosphorylated MDC1 and catalyzes the 'Lys-63'-linked ubiquitination of histones H2A and H2AX, thereby promoting the formation of TP53BP1 and BRCA1 ionizing radiation-induced foci (IRIF). Also controls the recruitment of UIMC1-BRCC3 (RAP80-BRCC36) and PAXIP1/PTIP to DNA damage sites. Promotes the recruitment of NBN to DNA damage sites by catalyzing 'Lys-6'-linked ubiquitination of NBN. Also recruited at DNA interstrand cross-links (ICLs) sites and catalyzes 'Lys-63'-linked ubiquitination of histones H2A and H2AX, leading to recruitment of FAAP20 and Fanconi anemia (FA) complex, followed by interstrand cross-link repair. H2A ubiquitination also mediates the ATM-dependent transcriptional silencing at regions flanking DSBs in cis, a mechanism to avoid collision between transcription and repair intermediates. Promotes the formation of 'Lys-63'-linked polyubiquitin chains via interactions with the specific ubiquitin-conjugating UBE2N/UBC13 and ubiquitinates non-histone substrates such as PCNA. Substrates that are polyubiquitinated at 'Lys-63' are usually not targeted for degradation. Also catalyzes the formation of 'Lys-48'-linked polyubiquitin chains via interaction with the ubiquitin-conjugating UBE2L6/UBCH8, leading to degradation of substrate proteins such as CHEK2, JMJD2A/KDM4A and KU80/XRCC5: it is still unclear how the preference toward 'Lys-48'- versus 'Lys-63'-linked ubiquitination is regulated but it could be due to RNF8 ability to interact with specific E2 specific ligases. For instance, interaction with phosphorylated HERC2 promotes the association between RNF8 and UBE2N/UBC13 and favors the specific formation of 'Lys-63'-linked ubiquitin chains. Promotes non-homologous end joining (NHEJ) by promoting the 'Lys-48'-linked ubiquitination and degradation the of KU80/XRCC5. Following DNA damage, mediates the ubiquitination and degradation of JMJD2A/KDM4A in collaboration with RNF168, leading to unmask H4K20me2 mark and promote the recruitment of TP53BP1 at DNA damage sites. Following DNA damage, mediates the ubiquitination and degradation of POLD4/p12, a subunit of DNA polymerase delta. In the absence of POLD4, DNA polymerase delta complex exhibits higher proofreading activity. In addition to its function in damage signaling, also plays a role in higher-order chromatin structure by mediating extensive chromatin decondensation. Involved in the activation of ATM by promoting histone H2B ubiquitination, which indirectly triggers histone H4 'Lys-16' acetylation (H4K16ac), establishing a chromatin environment that promotes efficient activation of ATM kinase. Required in the testis, where it plays a role in the replacement of histones during spermatogenesis. At uncapped telomeres, promotes the joining of deprotected chromosome ends by inducing H2A ubiquitination and TP53BP1 recruitment, suggesting that it may enhance cancer development by aggravating telomere-induced genome instability in case of telomeric crisis. Promotes the assembly of RAD51 at DNA DSBs in the absence of BRCA1 and TP53BP1 Also involved in class switch recombination in immune system, via its role in regulation of DSBs repair. May be required for proper exit from mitosis after spindle checkpoint activation and may regulate cytokinesis. May play a role in the regulation of RXRA-mediated transcriptional activity. Not involved in RXRA ubiquitination by UBE2E2. This chain is E3 ubiquitin-protein ligase RNF8, found in Pongo abelii (Sumatran orangutan).